The chain runs to 646 residues: Chaperone protein DnaK (646 aa).

The residue at position 198 (T198) is a Phosphothreonine; by autocatalysis. Residues E603 to K646 form a disordered region. Over residues A618–Q627 the composition is skewed to low complexity.

This sequence belongs to the heat shock protein 70 family.

Its function is as follows. Acts as a chaperone. This is Chaperone protein DnaK from Acinetobacter baumannii (strain AB307-0294).